A 92-amino-acid polypeptide reads, in one-letter code: UPF0235 protein PYRAB05010 (92 aa).

This sequence belongs to the UPF0235 family.

The sequence is that of UPF0235 protein PYRAB05010 from Pyrococcus abyssi (strain GE5 / Orsay).